Here is a 161-residue protein sequence, read N- to C-terminus: 2-C-methyl-D-erythritol 2,4-cyclodiphosphate synthase (161 aa).

The a divalent metal cation site is built by D10 and H12. Residues 10–12 (DVH) and 36–37 (HS) contribute to the 4-CDP-2-C-methyl-D-erythritol 2-phosphate site. H44 is a binding site for a divalent metal cation. Residues 58-60 (DIG), 63-67 (FPDTD), 102-108 (AQVPKMA), 134-137 (TTTE), F141, and R144 each bind 4-CDP-2-C-methyl-D-erythritol 2-phosphate.

This sequence belongs to the IspF family. Homotrimer. It depends on a divalent metal cation as a cofactor.

It catalyses the reaction 4-CDP-2-C-methyl-D-erythritol 2-phosphate = 2-C-methyl-D-erythritol 2,4-cyclic diphosphate + CMP. The protein operates within isoprenoid biosynthesis; isopentenyl diphosphate biosynthesis via DXP pathway; isopentenyl diphosphate from 1-deoxy-D-xylulose 5-phosphate: step 4/6. Functionally, involved in the biosynthesis of isopentenyl diphosphate (IPP) and dimethylallyl diphosphate (DMAPP), two major building blocks of isoprenoid compounds. Catalyzes the conversion of 4-diphosphocytidyl-2-C-methyl-D-erythritol 2-phosphate (CDP-ME2P) to 2-C-methyl-D-erythritol 2,4-cyclodiphosphate (ME-CPP) with a corresponding release of cytidine 5-monophosphate (CMP). The chain is 2-C-methyl-D-erythritol 2,4-cyclodiphosphate synthase from Shewanella baltica (strain OS223).